The primary structure comprises 205 residues: Dephospho-CoA kinase (205 aa).

Residues 7-205 (IIGVTGRIAS…QGIINYERFE (199 aa)) enclose the DPCK domain. 15–20 (ASGKDT) contacts ATP.

Belongs to the CoaE family.

The protein localises to the cytoplasm. The catalysed reaction is 3'-dephospho-CoA + ATP = ADP + CoA + H(+). Its pathway is cofactor biosynthesis; coenzyme A biosynthesis; CoA from (R)-pantothenate: step 5/5. Catalyzes the phosphorylation of the 3'-hydroxyl group of dephosphocoenzyme A to form coenzyme A. This chain is Dephospho-CoA kinase, found in Borreliella burgdorferi (strain ATCC 35210 / DSM 4680 / CIP 102532 / B31) (Borrelia burgdorferi).